The following is a 302-amino-acid chain: N-acetylmuramic acid 6-phosphate etherase (302 aa).

The region spanning 55 to 218 (AYPKFDQGGR…STGIMVKSGK (164 aa)) is the SIS domain. Glutamate 83 serves as the catalytic Proton donor. Residue glutamate 114 is part of the active site.

The protein belongs to the GCKR-like family. MurNAc-6-P etherase subfamily. As to quaternary structure, homodimer.

The catalysed reaction is N-acetyl-D-muramate 6-phosphate + H2O = N-acetyl-D-glucosamine 6-phosphate + (R)-lactate. Its pathway is amino-sugar metabolism; N-acetylmuramate degradation. Its function is as follows. Specifically catalyzes the cleavage of the D-lactyl ether substituent of MurNAc 6-phosphate, producing GlcNAc 6-phosphate and D-lactate. The sequence is that of N-acetylmuramic acid 6-phosphate etherase from Levilactobacillus brevis (strain ATCC 367 / BCRC 12310 / CIP 105137 / JCM 1170 / LMG 11437 / NCIMB 947 / NCTC 947) (Lactobacillus brevis).